A 109-amino-acid chain; its full sequence is Cell division protein ZapA (109 aa).

Residues 22-99 (EQQDALNMAA…IEQALLEQGR (78 aa)) are a coiled coil.

It belongs to the ZapA family. Type 1 subfamily. As to quaternary structure, homodimer. Interacts with FtsZ.

It is found in the cytoplasm. In terms of biological role, activator of cell division through the inhibition of FtsZ GTPase activity, therefore promoting FtsZ assembly into bundles of protofilaments necessary for the formation of the division Z ring. It is recruited early at mid-cell but it is not essential for cell division. In Yersinia pseudotuberculosis serotype O:1b (strain IP 31758), this protein is Cell division protein ZapA.